Here is a 125-residue protein sequence, read N- to C-terminus: MAGSSLACCLLGLLALTSACYIQNCPLGGKRAVLDLDVRTCLPCGPGGKGRCFGPSICCGDELGCFVGTAEALRCQEENYLPSPCQSGQKPCGSGGRCAAAGICCSPDGCHEDPACDPEAAFSQH.

The signal sequence occupies residues 1–19 (MAGSSLACCLLGLLALTSA). Cys-20 and Cys-25 are disulfide-bonded. Gly-28 bears the Glycine amide mark. 7 cysteine pairs are disulfide-bonded: Cys-41–Cys-85, Cys-44–Cys-58, Cys-52–Cys-75, Cys-59–Cys-65, Cys-92–Cys-104, Cys-98–Cys-116, and Cys-105–Cys-110.

The protein belongs to the vasopressin/oxytocin family. In terms of assembly, interacts with oxytocin receptor (Ki=1.5 nM). Interacts with vasopressin V1aR/AVPR1A (Ki=37 nM), V1bR/AVPR1B (Ki=222 nM), and V2R/AVPR2 receptors (Ki=823 nM).

The protein localises to the secreted. In terms of biological role, neurophysin 1 specifically binds oxytocin. Functionally, oxytocin causes contraction of the smooth muscle of the uterus and of the mammary gland. Acts by binding to oxytocin receptor (OXTR). The sequence is that of Oxytocin-neurophysin 1 (OXT) from Bos taurus (Bovine).